We begin with the raw amino-acid sequence, 224 residues long: Adenylate kinase (224 aa).

10–15 (GSGKST) lines the ATP pocket. An NMP region spans residues 30–59 (SSGDMIRAEIEKGSELGKELKKYLAKGELI). AMP-binding positions include serine 31, arginine 36, 57–59 (ELI), 83–86 (GYPR), and glutamine 90. An LID region spans residues 124 to 161 (GRRICPKCGAVYHLRYRPPKVPGKCDLCGSQLIQREDD). An ATP-binding site is contributed by arginine 125. Residues cysteine 128 and cysteine 131 each coordinate Zn(2+). 134 to 135 (VY) contacts ATP. Positions 148 and 151 each coordinate Zn(2+). Positions 158 and 169 each coordinate AMP. Glycine 197 contributes to the ATP binding site.

It belongs to the adenylate kinase family. As to quaternary structure, monomer.

The protein localises to the cytoplasm. The catalysed reaction is AMP + ATP = 2 ADP. It participates in purine metabolism; AMP biosynthesis via salvage pathway; AMP from ADP: step 1/1. Functionally, catalyzes the reversible transfer of the terminal phosphate group between ATP and AMP. Plays an important role in cellular energy homeostasis and in adenine nucleotide metabolism. This is Adenylate kinase from Thermococcus onnurineus (strain NA1).